We begin with the raw amino-acid sequence, 340 residues long: DNA-directed RNA polymerase subunit alpha (340 aa).

Residues methionine 1–glutamate 236 are alpha N-terminal domain (alpha-NTD). Residues phenylalanine 251–asparagine 340 form an alpha C-terminal domain (alpha-CTD) region.

It belongs to the RNA polymerase alpha chain family. Homodimer. The RNAP catalytic core consists of 2 alpha, 1 beta, 1 beta' and 1 omega subunit. When a sigma factor is associated with the core the holoenzyme is formed, which can initiate transcription.

The catalysed reaction is RNA(n) + a ribonucleoside 5'-triphosphate = RNA(n+1) + diphosphate. Functionally, DNA-dependent RNA polymerase catalyzes the transcription of DNA into RNA using the four ribonucleoside triphosphates as substrates. This is DNA-directed RNA polymerase subunit alpha from Rickettsia peacockii (strain Rustic).